Reading from the N-terminus, the 346-residue chain is Protein RecA (346 aa).

An ATP-binding site is contributed by 67 to 74; that stretch reads GPESSGKT.

The protein belongs to the RecA family.

The protein localises to the cytoplasm. Can catalyze the hydrolysis of ATP in the presence of single-stranded DNA, the ATP-dependent uptake of single-stranded DNA by duplex DNA, and the ATP-dependent hybridization of homologous single-stranded DNAs. It interacts with LexA causing its activation and leading to its autocatalytic cleavage. The polypeptide is Protein RecA (Saccharopolyspora erythraea (strain ATCC 11635 / DSM 40517 / JCM 4748 / NBRC 13426 / NCIMB 8594 / NRRL 2338)).